The chain runs to 257 residues: 5-oxoprolinase subunit A (257 aa).

It belongs to the LamB/PxpA family. As to quaternary structure, forms a complex composed of PxpA, PxpB and PxpC.

It carries out the reaction 5-oxo-L-proline + ATP + 2 H2O = L-glutamate + ADP + phosphate + H(+). Catalyzes the cleavage of 5-oxoproline to form L-glutamate coupled to the hydrolysis of ATP to ADP and inorganic phosphate. This Halalkalibacterium halodurans (strain ATCC BAA-125 / DSM 18197 / FERM 7344 / JCM 9153 / C-125) (Bacillus halodurans) protein is 5-oxoprolinase subunit A.